The primary structure comprises 529 residues: Peptide chain release factor 3 (529 aa).

In terms of domain architecture, tr-type G spans 11 to 280 (AKRRTFAIIS…GLVEWAPAPM (270 aa)). GTP-binding positions include 20–27 (SHPDAGKT), 88–92 (DTPGH), and 142–145 (NKLD).

Belongs to the TRAFAC class translation factor GTPase superfamily. Classic translation factor GTPase family. PrfC subfamily.

Its subcellular location is the cytoplasm. Its function is as follows. Increases the formation of ribosomal termination complexes and stimulates activities of RF-1 and RF-2. It binds guanine nucleotides and has strong preference for UGA stop codons. It may interact directly with the ribosome. The stimulation of RF-1 and RF-2 is significantly reduced by GTP and GDP, but not by GMP. This is Peptide chain release factor 3 from Klebsiella pneumoniae subsp. pneumoniae (strain ATCC 700721 / MGH 78578).